A 747-amino-acid chain; its full sequence is DNA-directed RNA polymerase subunit beta' (747 aa).

Residues Cys-70, Cys-72, Cys-97, and Cys-100 each contribute to the Zn(2+) site. Residues Asp-502, Asp-504, and Asp-506 each contribute to the Mg(2+) site.

This sequence belongs to the RNA polymerase beta' chain family. RpoC1 subfamily. In terms of assembly, in plastids the minimal PEP RNA polymerase catalytic core is composed of four subunits: alpha, beta, beta', and beta''. When a (nuclear-encoded) sigma factor is associated with the core the holoenzyme is formed, which can initiate transcription. Mg(2+) is required as a cofactor. Zn(2+) serves as cofactor.

Its subcellular location is the plastid. It localises to the chloroplast. It carries out the reaction RNA(n) + a ribonucleoside 5'-triphosphate = RNA(n+1) + diphosphate. Functionally, DNA-dependent RNA polymerase catalyzes the transcription of DNA into RNA using the four ribonucleoside triphosphates as substrates. This is DNA-directed RNA polymerase subunit beta' from Gnetum parvifolium (Small-leaved jointfir).